We begin with the raw amino-acid sequence, 225 residues long: MSYTIYLVEDEDNLNELLTKYLENEGWNITSFTKGEDARKKMTPSPHLWILDIMLPDTDGYTLIKEIKAKDPDVPVIFISARDADIDRVLGLELGSNDYISKPFLPRELIIRVQKLLQLVYKEAPPVQKNEIAVSSYRVAEDAREVYDENGNIINLTSKEFDLLLLFIHHKGHPYSREDILLKVWGHDYFGTDRVVDDLVRRLRRKMPELKVETIYGFGYRMMSS.

A Response regulatory domain is found at 4–117 (TIYLVEDEDN…ELIIRVQKLL (114 aa)). Asp52 is modified (4-aspartylphosphate). A DNA-binding region (ompR/PhoB-type) is located at residues 129–224 (KNEIAVSSYR…IYGFGYRMMS (96 aa)).

Post-translationally, phosphorylated by CssS.

Its subcellular location is the cytoplasm. Member of the two-component regulatory system CssS/CssR required to control the cellular response to secretion stress. The chain is Transcriptional regulatory protein CssR (cssR) from Bacillus subtilis (strain 168).